The primary structure comprises 254 residues: Gamma-glutamyl-gamma-aminobutyrate hydrolase (254 aa).

A Glutamine amidotransferase type-1 domain is found at 16–250 (RNRLKGHATQ…ITACQHHIAE (235 aa)). The Nucleophile role is filled by Cys-114. Catalysis depends on residues His-222 and Glu-224.

Belongs to the peptidase C26 family.

It catalyses the reaction 4-(gamma-L-glutamylamino)butanoate + H2O = 4-aminobutanoate + L-glutamate. Its pathway is amine and polyamine degradation; putrescine degradation; 4-aminobutanoate from putrescine: step 4/4. Its function is as follows. Involved in the breakdown of putrescine via hydrolysis of the gamma-glutamyl linkage of gamma-glutamyl-gamma-aminobutyrate. The polypeptide is Gamma-glutamyl-gamma-aminobutyrate hydrolase (puuD) (Escherichia coli O157:H7).